The following is a 523-amino-acid chain: Translation initiation factor eIF2B subunit delta (523 aa).

Residues 1–154 (MAAVAVAVRE…EHTQADDPTL (154 aa)) are disordered. At Ala-2 the chain carries N-acetylalanine. Ser-12 is modified (phosphoserine). The segment covering 31–40 (MTQEEKLQLR) has biased composition (basic and acidic residues). A compositionally biased stretch (basic residues) spans 41 to 51 (KEKKQQKKKRK). Thr-85 is modified (phosphothreonine). The span at 95–120 (TKAELRAERRAKQEAERALKQARKGE) shows a compositional bias: basic and acidic residues. Phosphoserine is present on Ser-129. The interval 170–179 (RKDYGSKVSL) is may bind the chemical integrated stress response (ISR) inhibitor ISRIB.

This sequence belongs to the eIF-2B alpha/beta/delta subunits family. Component of the translation initiation factor 2B (eIF2B) complex which is a heterodecamer of two sets of five different subunits: alpha, beta, gamma, delta and epsilon. Subunits alpha, beta and delta comprise a regulatory subcomplex and subunits epsilon and gamma comprise a catalytic subcomplex. Within the complex, the hexameric regulatory complex resides at the center, with the two heterodimeric catalytic subcomplexes bound on opposite sides.

The protein resides in the cytoplasm. The protein localises to the cytosol. Its activity is regulated as follows. Activated by the chemical integrated stress response (ISR) inhibitor ISRIB which stimulates guanine nucleotide exchange factor activity for both phosphorylated and unphosphorylated eIF2. Its function is as follows. Acts as a component of the translation initiation factor 2B (eIF2B) complex, which catalyzes the exchange of GDP for GTP on eukaryotic initiation factor 2 (eIF2) gamma subunit. Its guanine nucleotide exchange factor activity is repressed when bound to eIF2 complex phosphorylated on the alpha subunit, thereby limiting the amount of methionyl-initiator methionine tRNA available to the ribosome and consequently global translation is repressed. This Oryctolagus cuniculus (Rabbit) protein is Translation initiation factor eIF2B subunit delta (EIF2B4).